We begin with the raw amino-acid sequence, 650 residues long: Peroxisomal biogenesis factor 8 (650 aa).

Residues 648–650 carry the Microbody targeting signal motif; that stretch reads AKL.

The protein resides in the peroxisome matrix. In terms of biological role, essential for peroxisome biogenesis. May play a role in triggering the protein import competence of individual peroxisomes. It may interact with PEX10. The chain is Peroxisomal biogenesis factor 8 (PEX8) from Pichia angusta (Yeast).